We begin with the raw amino-acid sequence, 506 residues long: MLWFQGAIPAAIASAKRSGAVFVVFVAGDDEQSTQMAASWEDEKVREASSDNFVAIKIDTKSEACLQFSQIYPVVCVPSSFFIGDSGIPLEVIAGSVSADELVTRIHKVQQMHSLKGETSVTNDKQSESSVSTPSASFEPDICESAESRNTELCETPTTSDPKSDTAAGGECAGHDSLSQEPPGCSNQRPAEDLTVRVERLTKKLEERREEKRKEEAQREIKKEIERRKTGKEMLDYKRKQEEELTKRMLEERSREKAEDRAARERIKQQIALDRAERAARFAKTKEAEAAKAAALLAKQAEAEVKRESSTRDRSTIARIQFRLPDGSSFTNQFPSDAPLEEARQFAAQTVGNTYGNFSLATMFPRREFTREDYKRKLLDLELAPSASVVLLPAGRPATSIVPSSSGDIWTLLGTVLYPFLAIWRLISNFLFSNPPPAQTSARATSTEPSNSASSSKSEKREPVRKRVLEKRGEDFKKEGKIYRLRTQDDGEDENNTWNGNSTQQM.

Residues 1–199 (MLWFQGAIPA…PAEDLTVRVE (199 aa)) form an interaction with UBQLN1 region. Topologically, residues 1–411 (MLWFQGAIPA…VPSSSGDIWT (411 aa)) are cytoplasmic. Composition is skewed to polar residues over residues 114-136 (SLKG…TPSA) and 177-189 (SLSQ…SNQR). A disordered region spans residues 114 to 193 (SLKGETSVTN…GCSNQRPAED (80 aa)). A UBX domain is found at 313 to 391 (DRSTIARIQF…ELAPSASVVL (79 aa)). Residues 412–432 (LLGTVLYPFLAIWRLISNFLF) lie within the membrane without spanning it. The Cytoplasmic segment spans residues 433–506 (SNPPPAQTSA…TWNGNSTQQM (74 aa)). The segment at 437–506 (PAQTSARATS…TWNGNSTQQM (70 aa)) is disordered. Low complexity predominate over residues 444–456 (ATSTEPSNSASSS). Positions 457-489 (KSEKREPVRKRVLEKRGEDFKKEGKIYRLRTQD) are enriched in basic and acidic residues. The residue at position 487 (Thr487) is a Phosphothreonine. Polar residues predominate over residues 496–506 (NTWNGNSTQQM).

In terms of assembly, directly interacts with VCP. Interacts with UBQLN1. Forms a complex with VCP and UBQLN1.

It is found in the endoplasmic reticulum membrane. The protein localises to the nucleus envelope. Functionally, involved in endoplasmic reticulum-associated protein degradation (ERAD). Acts as a platform to recruit both UBQLN1 and VCP to the ER during ERAD. This Rattus norvegicus (Rat) protein is UBX domain-containing protein 4 (Ubxn4).